We begin with the raw amino-acid sequence, 605 residues long: Cell wall integrity and stress response component 4 (605 aa).

The N-terminal stretch at 1–26 (MQTSMVSAKVSIWLVCSVICSSLVRA) is a signal peptide. The region spanning 27–110 (TQSVCSSQNT…DKDLFGYIYL (84 aa)) is the WSC domain. The tract at residues 151–305 (SPTLTSTSTT…PSSTTVTYTS (155 aa)) is disordered. Residues Asn-340, Asn-386, Asn-389, and Asn-398 are each glycosylated (N-linked (GlcNAc...) asparagine). A compositionally biased stretch (low complexity) spans 381–399 (RITNNNNSNTTNSNTPTNK). The segment at 381–404 (RITNNNNSNTTNSNTPTNKSTEKK) is disordered. The helical transmembrane segment at 415 to 435 (ATFVVVGVVCLVIICILIYLI) threads the bilayer. The N-linked (GlcNAc...) asparagine glycan is linked to Asn-479. The disordered stretch occupies residues 494-521 (GQIMSESPSPRQSTYSLTAGSPPNDPST). Polar residues predominate over residues 497–521 (MSESPSPRQSTYSLTAGSPPNDPST). N-linked (GlcNAc...) asparagine glycosylation is found at Asn-553 and Asn-583.

It is found in the membrane. The chain is Cell wall integrity and stress response component 4 (WSC4) from Saccharomyces cerevisiae (strain ATCC 204508 / S288c) (Baker's yeast).